The following is a 223-amino-acid chain: Ion-translocating oxidoreductase complex subunit E (223 aa).

The next 6 membrane-spanning stretches (helical) occupy residues 17-37, 40-60, 70-90, 94-114, 129-149, and 182-202; these read NGVLCMLLGMCPTMAMTGTAT, LGMGLATAAVMAASNLMVAMF, IPVYILIVAANVTFVDLGMNA, ELYKVLGLFIPLIVSNCLPLA, FLDGLFMGLGFTLALTAIGAV, and WGILVLILPPGGFLIAGLMVV.

Belongs to the NqrDE/RnfAE family. The complex is composed of six subunits: RnfA, RnfB, RnfC, RnfD, RnfE and RnfG.

It localises to the cell inner membrane. Its function is as follows. Part of a membrane-bound complex that couples electron transfer with translocation of ions across the membrane. This is Ion-translocating oxidoreductase complex subunit E from Paramagnetospirillum magneticum (strain ATCC 700264 / AMB-1) (Magnetospirillum magneticum).